Reading from the N-terminus, the 321-residue chain is Methionyl-tRNA formyltransferase (321 aa).

112 to 115 contributes to the (6S)-5,6,7,8-tetrahydrofolate binding site; that stretch reads SILP.

The protein belongs to the Fmt family.

It catalyses the reaction L-methionyl-tRNA(fMet) + (6R)-10-formyltetrahydrofolate = N-formyl-L-methionyl-tRNA(fMet) + (6S)-5,6,7,8-tetrahydrofolate + H(+). Its function is as follows. Attaches a formyl group to the free amino group of methionyl-tRNA(fMet). The formyl group appears to play a dual role in the initiator identity of N-formylmethionyl-tRNA by promoting its recognition by IF2 and preventing the misappropriation of this tRNA by the elongation apparatus. This is Methionyl-tRNA formyltransferase from Shewanella pealeana (strain ATCC 700345 / ANG-SQ1).